A 498-amino-acid polypeptide reads, in one-letter code: ATP synthase subunit beta, chloroplastic (498 aa).

An ATP-binding site is contributed by 172–179 (GGAGVGKT).

This sequence belongs to the ATPase alpha/beta chains family. As to quaternary structure, F-type ATPases have 2 components, CF(1) - the catalytic core - and CF(0) - the membrane proton channel. CF(1) has five subunits: alpha(3), beta(3), gamma(1), delta(1), epsilon(1). CF(0) has four main subunits: a(1), b(1), b'(1) and c(9-12).

It localises to the plastid. The protein resides in the chloroplast thylakoid membrane. The catalysed reaction is ATP + H2O + 4 H(+)(in) = ADP + phosphate + 5 H(+)(out). Functionally, produces ATP from ADP in the presence of a proton gradient across the membrane. The catalytic sites are hosted primarily by the beta subunits. In Agrostis stolonifera (Creeping bentgrass), this protein is ATP synthase subunit beta, chloroplastic.